Reading from the N-terminus, the 269-residue chain is Ribonuclease HII (269 aa).

In terms of domain architecture, RNase H type-2 spans 83–269; sequence YLIAGVDEVG…HRMSFLTNIL (187 aa). Residues Asp89, Glu90, and Asp185 each coordinate a divalent metal cation.

Belongs to the RNase HII family. Requires Mn(2+) as cofactor. The cofactor is Mg(2+).

The protein resides in the cytoplasm. It catalyses the reaction Endonucleolytic cleavage to 5'-phosphomonoester.. In terms of biological role, endonuclease that specifically degrades the RNA of RNA-DNA hybrids. The polypeptide is Ribonuclease HII (Clostridium botulinum (strain Langeland / NCTC 10281 / Type F)).